The chain runs to 408 residues: Intracellular coagulation inhibitor 2 (408 aa).

The N-terminal stretch at 1-22 is a signal peptide; it reads MLSRRTLDCCLVMLIVSTTFCQ. Cysteines 50 and 249 form a disulfide. Asn174 carries an N-linked (GlcNAc...) asparagine glycan.

This sequence belongs to the serpin family. Monomer. Forms a covalent heterodimer with clotting factor C chain B. Forms a covalent heterodimer with proclotting enzyme heavy chain. Specifically expressed in hemocytes (at protein level).

Its subcellular location is the secreted. In terms of biological role, serine protease inhibitor that inhibits proclotting enzyme and to a lesser extent clotting factor C and clotting factor G. The polypeptide is Intracellular coagulation inhibitor 2 (Tachypleus tridentatus (Japanese horseshoe crab)).